Here is a 347-residue protein sequence, read N- to C-terminus: Fe(2+) transport protein 1 (347 aa).

An N-terminal signal peptide occupies residues 1–22; it reads MASNSALLMKTIFLVLIFVSFA. The Extracellular portion of the chain corresponds to 23–52; the sequence is ISPATSTAPEECGSESANPCVNKAKALPLK. A helical transmembrane segment spans residues 53 to 73; that stretch reads VIAIFVILIASMIGVGAPLFS. The Cytoplasmic portion of the chain corresponds to 74-84; sequence RNVSFLQPDGN. A helical transmembrane segment spans residues 85–105; sequence IFTIIKCFASGIILGTGFMHV. Residues 106-125 lie on the Extracellular side of the membrane; it reads LPDSFEMLSSICLEENPWHK. A helical membrane pass occupies residues 126-146; it reads FPFSGFLAMLSGLITLAIDSM. The Cytoplasmic segment spans residues 147 to 192; the sequence is ATSLYTSKNAVGIMPHGHGHGHGPANDVTLPIKEDDSSNAQLLRYR. Residues K154 and K179 each participate in a glycyl lysine isopeptide (Lys-Gly) (interchain with G-Cter in ubiquitin) cross-link. Residues 193–213 traverse the membrane as a helical segment; it reads VIAMVLELGIIVHSVVIGLSL. Residues 214 to 224 are Extracellular-facing; it reads GATSDTCTIKG. The helical transmembrane segment at 225–245 threads the bilayer; the sequence is LIAALCFHQMFEGMGLGGCIL. Residues 246–254 are Cytoplasmic-facing; sequence QAEYTNMKK. A helical membrane pass occupies residues 255 to 275; sequence FVMAFFFAVTTPFGIALGIAL. The Extracellular segment spans residues 276 to 286; sequence STVYQDNSPKA. The chain crosses the membrane as a helical span at residues 287 to 307; the sequence is LITVGLLNACSAGLLIYMALV. The Cytoplasmic segment spans residues 308–326; that stretch reads DLLAAEFMGPKLQGSIKMQ. Residues 327–347 traverse the membrane as a helical segment; that stretch reads FKCLIAALLGCGGMSIIAKWA.

It belongs to the ZIP transporter (TC 2.A.5) family. In terms of assembly, interacts with FREE1. Post-translationally, monoubiquitinated on several Lys residues. Monoubiquitination controls trafficking from the plasma membrane and targeting to the vacuole. Expressed in the external cell layers of the root including the lateral branching zone. Also detected in flowers before pollination.

The protein resides in the cell membrane. It is found in the early endosome. It localises to the golgi apparatus. Its subcellular location is the trans-Golgi network. The protein localises to the vacuole. Its function is as follows. High-affinity iron transporter that plays a key role in the uptake of iron from the rhizosphere across the plasma membrane in the root epidermal layer. Acts as the principal regulator of iron homeostasis in planta. Also mediates the heavy metals uptake under iron-deficiency by its ability to transport cobalt, cadmium, manganese and/or zinc ions. The sequence is that of Fe(2+) transport protein 1 (IRT1) from Arabidopsis thaliana (Mouse-ear cress).